The sequence spans 89 residues: Small ribosomal subunit protein uS15 (89 aa).

It belongs to the universal ribosomal protein uS15 family. Part of the 30S ribosomal subunit. Forms a bridge to the 50S subunit in the 70S ribosome, contacting the 23S rRNA.

One of the primary rRNA binding proteins, it binds directly to 16S rRNA where it helps nucleate assembly of the platform of the 30S subunit by binding and bridging several RNA helices of the 16S rRNA. Functionally, forms an intersubunit bridge (bridge B4) with the 23S rRNA of the 50S subunit in the ribosome. The chain is Small ribosomal subunit protein uS15 from Chlorobium phaeobacteroides (strain BS1).